The chain runs to 61 residues: Photosystem II reaction center protein K (61 aa).

Residues 1–24 constitute a propeptide that is removed on maturation; sequence MLNIFNLICICFNSALFSSTFLVA. Residues 40 to 60 traverse the membrane as a helical segment; the sequence is MPVIPLFFLLLAFVWQAAVSF.

This sequence belongs to the PsbK family. As to quaternary structure, PSII is composed of 1 copy each of membrane proteins PsbA, PsbB, PsbC, PsbD, PsbE, PsbF, PsbH, PsbI, PsbJ, PsbK, PsbL, PsbM, PsbT, PsbX, PsbY, PsbZ, Psb30/Ycf12, at least 3 peripheral proteins of the oxygen-evolving complex and a large number of cofactors. It forms dimeric complexes.

It is found in the plastid. It localises to the chloroplast thylakoid membrane. In terms of biological role, one of the components of the core complex of photosystem II (PSII). PSII is a light-driven water:plastoquinone oxidoreductase that uses light energy to abstract electrons from H(2)O, generating O(2) and a proton gradient subsequently used for ATP formation. It consists of a core antenna complex that captures photons, and an electron transfer chain that converts photonic excitation into a charge separation. The polypeptide is Photosystem II reaction center protein K (Sinapis alba (White mustard)).